The following is a 193-amino-acid chain: Probable GTP-binding protein EngB (193 aa).

The EngB-type G domain occupies Ser19–Ala188. GTP-binding positions include Gly27 to Ser34, Gly53 to Leu57, Asp70 to Gly73, Asn136 to Asp139, and Val167 to Ala169. Mg(2+)-binding residues include Ser34 and Thr55.

The protein belongs to the TRAFAC class TrmE-Era-EngA-EngB-Septin-like GTPase superfamily. EngB GTPase family. It depends on Mg(2+) as a cofactor.

In terms of biological role, necessary for normal cell division and for the maintenance of normal septation. The chain is Probable GTP-binding protein EngB from Mycoplasma pneumoniae (strain ATCC 29342 / M129 / Subtype 1) (Mycoplasmoides pneumoniae).